The primary structure comprises 311 residues: Heme A synthase (311 aa).

At 1–6 the chain is on the cytoplasmic side; it reads MQRFIK. Residues 7–27 traverse the membrane as a helical segment; that stretch reads WLAVITSLDLLIVLLGGALVT. At 28 to 62 the chain is on the extracellular side; it reads KTGSGQGCGKSWPLCNGEFVPSNLSMETIIELSHR. C35 and C42 are disulfide-bonded. E58 is a catalytic residue. Position 61 (H61) interacts with heme o. The chain crosses the membrane as a helical span at residues 63 to 83; that stretch reads LTSGSAGILVTLLCILSWKYY. The Cytoplasmic portion of the chain corresponds to 84 to 91; that stretch reads KHVRETKT. Residues 92-112 form a helical membrane-spanning segment; that stretch reads LAILSFVFLVAQALMGAAAVV. The Extracellular segment spans residues 113 to 121; sequence WGQMPAVLA. The chain crosses the membrane as a helical span at residues 122–142; sequence IHFGISLISFASVILLTCLIF. A heme o-binding site is contributed by H123. At 143 to 159 the chain is on the cytoplasmic side; that stretch reads EIDQKFDARSLIMDKKM. A helical membrane pass occupies residues 160-180; that stretch reads KFHIYGVTIYSYIVVYTGALV. Over 181–211 the chain is Extracellular; sequence RHERASLACPDFPLCSKNRPMPTQLHEWVQM. An intrachain disulfide couples C189 to C195. The chain crosses the membrane as a helical span at residues 212–232; sequence GHRVAAMLIFAWILYAMILAI. Residue H213 coordinates heme b. Over 233 to 243 the chain is Cytoplasmic; that stretch reads RHYKQQPVVYW. The helical transmembrane segment at 244–264 threads the bilayer; the sequence is GWIISFILVTLQAVVGVLVVF. Over 265-271 the chain is Extracellular; it reads TNASLAM. A helical membrane pass occupies residues 272–292; sequence ALLHSLFISCLFAVLCYLVML. H275 serves as a coordination point for heme b. Over 293 to 311 the chain is Cytoplasmic; that stretch reads GTRIKVNAKEAGSTSKQTK.

It belongs to the COX15/CtaA family. Type 1 subfamily. In terms of assembly, interacts with CtaB. Heme b is required as a cofactor.

It localises to the cell membrane. The enzyme catalyses Fe(II)-heme o + 2 A + H2O = Fe(II)-heme a + 2 AH2. It functions in the pathway porphyrin-containing compound metabolism; heme A biosynthesis; heme A from heme O: step 1/1. Functionally, catalyzes the conversion of heme O to heme A by two successive hydroxylations of the methyl group at C8. The first hydroxylation forms heme I, the second hydroxylation results in an unstable dihydroxymethyl group, which spontaneously dehydrates, resulting in the formyl group of heme A. The polypeptide is Heme A synthase (Bacillus cereus (strain G9842)).